A 448-amino-acid polypeptide reads, in one-letter code: FAD-dependent monooxygenase srdH (448 aa).

Glu-32 and Arg-107 together coordinate FAD. Gln-227 is an active-site residue. Position 313 (Asp-313) interacts with FAD.

It belongs to the paxM FAD-dependent monooxygenase family. Requires FAD as cofactor.

Its function is as follows. Highly reducing polyketide synthase; part of the gene cluster that mediates the biosynthesis of sordarial, a salicylic aldehyde structurally related to the phytotoxin pyriculol. The most interesting aspect of this pathway is formation of an aromatic product from the highly reducing polyketide synthase srdA. SrdA synthesizes a reduced polyketide chain from one molecule of acetyl-CoA and five molecules of malonyl-CoA. The polyketide chain is then reductively released as an aldehyde. The oxidoreductases srdC, srdD and srdE then oxidize one of the hydroxy groups to facilitate the intramolecular aldol condensation, followed by dehydration to yield a salicylic aldehyde. This aldehyde can undergo facile reduction by endogenous reductases to yield the alcohol 1-hydroxy-2-hydroxymethyl-3-pent-1,3-dienylbenzene. The flavin-dependent srdI counteract against the propensity of the aldehydes to be reduced under physiological conditions and is responsible for reoxidizing 1-hydroxy-2-hydroxymethyl-3-pent-1,3-dienylbenzene back to the salicylic aldehyde. This salicylic aldehyde is then selectively epoxidized by the cupin-domain-containing oxidoreductase srdB to yield the epoxide, which can be hydrolyzed stereoselectively by the hydrolase srdG to give the final product sordarial. The protein is FAD-dependent monooxygenase srdH of Neurospora crassa (strain ATCC 24698 / 74-OR23-1A / CBS 708.71 / DSM 1257 / FGSC 987).